The following is a 214-amino-acid chain: Adenylate kinase (214 aa).

10–15 serves as a coordination point for ATP; it reads GAGKGT. The NMP stretch occupies residues 30–59; sequence STGDMLRAAIKAGTELGKQAKSVIDAGQLV. AMP contacts are provided by residues threonine 31, arginine 36, 57-59, 85-88, and glutamine 92; these read QLV and GFPR. An LID region spans residues 122–159; sequence GRRAHLPSGRTYHNVYNPPKEEGKDDITGEELVVRDDD. ATP contacts are provided by residues arginine 123 and 132–133; that span reads TY. Residues arginine 156 and arginine 167 each contribute to the AMP site. Lysine 200 is an ATP binding site.

Belongs to the adenylate kinase family. Monomer.

Its subcellular location is the cytoplasm. The catalysed reaction is AMP + ATP = 2 ADP. It participates in purine metabolism; AMP biosynthesis via salvage pathway; AMP from ADP: step 1/1. Catalyzes the reversible transfer of the terminal phosphate group between ATP and AMP. Plays an important role in cellular energy homeostasis and in adenine nucleotide metabolism. The polypeptide is Adenylate kinase (Vibrio atlanticus (strain LGP32) (Vibrio splendidus (strain Mel32))).